A 776-amino-acid polypeptide reads, in one-letter code: Probable exo-1,4-beta-xylosidase bxlB (776 aa).

Positions 1–23 (MVHLSPLLRPLAAFSFFTSLAST) are cleaved as a signal peptide. N-linked (GlcNAc...) asparagine glycans are attached at residues N65 and N105. D291 is an active-site residue. N-linked (GlcNAc...) asparagine glycans are attached at residues N343, N410, N421, N462, N623, and N766.

This sequence belongs to the glycosyl hydrolase 3 family.

The protein localises to the secreted. It catalyses the reaction Hydrolysis of (1-&gt;4)-beta-D-xylans, to remove successive D-xylose residues from the non-reducing termini.. Its pathway is glycan degradation; xylan degradation. Its function is as follows. Xylan 1,4-beta-xylosidase involved in the hydrolysis of xylan, a major structural heterogeneous polysaccharide found in plant biomass representing the second most abundant polysaccharide in the biosphere, after cellulose. The chain is Probable exo-1,4-beta-xylosidase bxlB (bxlB) from Aspergillus flavus (strain ATCC 200026 / FGSC A1120 / IAM 13836 / NRRL 3357 / JCM 12722 / SRRC 167).